Here is a 156-residue protein sequence, read N- to C-terminus: Peptide deformylase 1 (156 aa).

2 residues coordinate Fe cation: cysteine 90 and histidine 132. Glutamate 133 is a catalytic residue. A Fe cation-binding site is contributed by histidine 136.

This sequence belongs to the polypeptide deformylase family. It depends on Fe(2+) as a cofactor.

It catalyses the reaction N-terminal N-formyl-L-methionyl-[peptide] + H2O = N-terminal L-methionyl-[peptide] + formate. Its function is as follows. Removes the formyl group from the N-terminal Met of newly synthesized proteins. Requires at least a dipeptide for an efficient rate of reaction. N-terminal L-methionine is a prerequisite for activity but the enzyme has broad specificity at other positions. The polypeptide is Peptide deformylase 1 (Bacillus anthracis).